The primary structure comprises 766 residues: Serine/threonine-protein kinase tousled-like 1 (766 aa).

Positions 1 to 198 are disordered; that stretch reads MSVQSSSGSL…PSPTALAFGD (198 aa). The segment covering 20-33 has biased composition (low complexity); sequence STSPTPGSAAAARS. At Thr-38 the chain carries Phosphothreonine. The segment covering 43-64 has biased composition (basic and acidic residues); sequence RPREGAMDELHSLDPRRQELLE. 3 positions are modified to phosphoserine: Ser-54, Ser-77, and Ser-80. The segment covering 68-85 has biased composition (low complexity); sequence TGVATGSTGSTGSCSVGA. Polar residues predominate over residues 87–103; the sequence is ASTNNESSNHSFGSLGS. Basic and acidic residues predominate over residues 105 to 121; it reads SDKESETPEKKQSESSR. Phosphoserine is present on residues Ser-134, Ser-159, Ser-174, and Ser-176. Residues 170–192 show a composition bias toward low complexity; the sequence is SPQNSHSHSTPSSSVRPNSPSPT. The stretch at 229 to 280 forms a coiled coil; the sequence is NQDLEKKEGRIDDLLRANCDLRRQIDDQQKLLEKYKERLNKCISMSKKLLIE. The segment at 344–381 is disordered; that stretch reads KLLGKRKPPTANNSQAPATNSEAKQRKTKAVNGAENDP. Residues 353-365 show a composition bias toward polar residues; it reads TANNSQAPATNSE. Residues 397–445 adopt a coiled-coil conformation; that stretch reads HEQEEIFKLRLGHLKKEEAEIQAELERLERVRNLHIRELKRINNEDNSQ. The 279-residue stretch at 456–734 folds into the Protein kinase domain; that stretch reads YLLLHLLGRG…VHQLANDPYL (279 aa). Residues 462-470 and Lys-485 contribute to the ATP site; that span reads LGRGGFSEV. The active-site Proton acceptor is the Asp-586. Ser-743 carries the phosphoserine modification. The tract at residues 745-766 is disordered; that stretch reads GNLHMSGLTATPTPPSSSIITY.

The protein belongs to the protein kinase superfamily. Ser/Thr protein kinase family. As to quaternary structure, heterodimer with TLK2. It depends on Mg(2+) as a cofactor. As to expression, ubiquitously expressed in all tissues examined.

Its subcellular location is the nucleus. The enzyme catalyses L-seryl-[protein] + ATP = O-phospho-L-seryl-[protein] + ADP + H(+). It catalyses the reaction L-threonyl-[protein] + ATP = O-phospho-L-threonyl-[protein] + ADP + H(+). Cell-cycle regulated, maximal activity in S-phase. Inactivated by phosphorylation at Ser-743, potentially by CHEK1. Functionally, rapidly and transiently inhibited by phosphorylation following the generation of DNA double-stranded breaks during S-phase. This is cell cycle checkpoint and ATM-pathway dependent and appears to regulate processes involved in chromatin assembly. Isoform 3 protects the cells from the ionizing radiation by facilitating the repair of DSBs. In vitro, phosphorylates histone H3 at 'Ser-10'. In Mus musculus (Mouse), this protein is Serine/threonine-protein kinase tousled-like 1 (Tlk1).